We begin with the raw amino-acid sequence, 87 residues long: Large ribosomal subunit protein eL31 (87 aa).

It belongs to the eukaryotic ribosomal protein eL31 family.

This Methanosphaerula palustris (strain ATCC BAA-1556 / DSM 19958 / E1-9c) protein is Large ribosomal subunit protein eL31.